The chain runs to 208 residues: dITP/XTP pyrophosphatase (208 aa).

S17–K22 contacts substrate. Residues D49 and D78 each contribute to the Mg(2+) site. The active-site Proton acceptor is D78. Substrate contacts are provided by residues S79, F164–D167, K187, and H192–R193.

This sequence belongs to the HAM1 NTPase family. Homodimer. Mg(2+) serves as cofactor.

The enzyme catalyses XTP + H2O = XMP + diphosphate + H(+). It catalyses the reaction dITP + H2O = dIMP + diphosphate + H(+). It carries out the reaction ITP + H2O = IMP + diphosphate + H(+). Functionally, pyrophosphatase that catalyzes the hydrolysis of nucleoside triphosphates to their monophosphate derivatives, with a high preference for the non-canonical purine nucleotides XTP (xanthosine triphosphate), dITP (deoxyinosine triphosphate) and ITP. Seems to function as a house-cleaning enzyme that removes non-canonical purine nucleotides from the nucleotide pool, thus preventing their incorporation into DNA/RNA and avoiding chromosomal lesions. This is dITP/XTP pyrophosphatase from Burkholderia pseudomallei (strain K96243).